A 152-amino-acid chain; its full sequence is Small ribosomal subunit protein uS13 (152 aa).

This sequence belongs to the universal ribosomal protein uS13 family. In terms of assembly, part of the 30S ribosomal subunit. Forms a loose heterodimer with protein S19. Forms two bridges to the 50S subunit in the 70S ribosome.

Its function is as follows. Located at the top of the head of the 30S subunit, it contacts several helices of the 16S rRNA. In the 70S ribosome it contacts the 23S rRNA (bridge B1a) and protein L5 of the 50S subunit (bridge B1b), connecting the 2 subunits; these bridges are implicated in subunit movement. The chain is Small ribosomal subunit protein uS13 from Pyrobaculum arsenaticum (strain DSM 13514 / JCM 11321 / PZ6).